The primary structure comprises 143 residues: Transmembrane protein 207 (143 aa).

Positions 1–29 (MSTSSPFRVASKIVTAGCLCLPLFQRVLS) are cleaved as a signal peptide. Residues 52 to 72 (IWFFLLIFLVVLLCGVVLFCL) form a helical membrane-spanning segment.

Interacts with WWOX.

The protein localises to the membrane. The sequence is that of Transmembrane protein 207 from Mus musculus (Mouse).